A 217-amino-acid polypeptide reads, in one-letter code: 7-cyano-7-deazaguanine synthase (217 aa).

ATP is bound at residue 7–17 (LSGGMDSTTLL). Cys183, Cys191, Cys194, and Cys197 together coordinate Zn(2+).

The protein belongs to the QueC family. The cofactor is Zn(2+).

The enzyme catalyses 7-carboxy-7-deazaguanine + NH4(+) + ATP = 7-cyano-7-deazaguanine + ADP + phosphate + H2O + H(+). It participates in purine metabolism; 7-cyano-7-deazaguanine biosynthesis. Catalyzes the ATP-dependent conversion of 7-carboxy-7-deazaguanine (CDG) to 7-cyano-7-deazaguanine (preQ(0)). The sequence is that of 7-cyano-7-deazaguanine synthase from Methanoregula boonei (strain DSM 21154 / JCM 14090 / 6A8).